A 37-amino-acid chain; its full sequence is MKRRPRKWKKKGRMRWKWIKKRIRRLKRQRKKERGLI.

Belongs to the eukaryotic ribosomal protein eS32 family. In terms of assembly, part of the small ribosomal subunit.

This is Small ribosomal subunit protein eS32 from Pyrococcus furiosus (strain ATCC 43587 / DSM 3638 / JCM 8422 / Vc1).